The following is a 460-amino-acid chain: UDP-N-acetylmuramoylalanine--D-glutamate ligase (460 aa).

ATP is bound at residue G120 to T126.

It belongs to the MurCDEF family.

Its subcellular location is the cytoplasm. It carries out the reaction UDP-N-acetyl-alpha-D-muramoyl-L-alanine + D-glutamate + ATP = UDP-N-acetyl-alpha-D-muramoyl-L-alanyl-D-glutamate + ADP + phosphate + H(+). It functions in the pathway cell wall biogenesis; peptidoglycan biosynthesis. Its function is as follows. Cell wall formation. Catalyzes the addition of glutamate to the nucleotide precursor UDP-N-acetylmuramoyl-L-alanine (UMA). The chain is UDP-N-acetylmuramoylalanine--D-glutamate ligase from Lactobacillus johnsonii (strain CNCM I-12250 / La1 / NCC 533).